Here is a 937-residue protein sequence, read N- to C-terminus: Protein Niban 1 (937 aa).

The N-myristoyl glycine moiety is linked to residue Gly2. Residues Ser578, Ser581, Ser595, Ser601, and Ser646 each carry the phosphoserine modification. Over residues 584 to 595 (DLKTSMGSNQAS) the composition is skewed to polar residues. Disordered stretches follow at residues 584 to 710 (DLKT…GSLR) and 724 to 891 (SAPE…LGGN). Positions 640-651 (ASISGSSPPSGE) are enriched in low complexity. Residues 655 to 681 (VSVSGVDNSAGNPLSADNSAGPLSSHL) show a composition bias toward polar residues. The segment covering 688-701 (EPPKDEETAHKRPE) has biased composition (basic and acidic residues). Residues Ser708 and Ser768 each carry the phosphoserine modification. Polar residues-rich tracts occupy residues 802–817 (PTSQ…NTSC) and 855–869 (VTVT…SSNP).

This sequence belongs to the Niban family. In terms of tissue distribution, detected in brain, lung, spleen and skeletal muscle. Expressed in small renal tumors but not in normal kidney.

Its subcellular location is the cytoplasm. The protein localises to the membrane. Its function is as follows. Regulates phosphorylation of a number of proteins involved in translation regulation including EIF2A, EIF4EBP1 and RPS6KB1. May be involved in the endoplasmic reticulum stress response. This chain is Protein Niban 1, found in Rattus norvegicus (Rat).